A 399-amino-acid polypeptide reads, in one-letter code: Carbamoyl phosphate synthase small chain (399 aa).

Residues 1–206 form a CPSase region; it reads MTQTIPSPKP…NKGYKTNNDA (206 aa). L-glutamine is bound by residues Ser-60, Gly-258, and Gly-260. The Glutamine amidotransferase type-1 domain occupies 210–398; sequence HIVAIDYGIK…FNLIMDYKKT (189 aa). Cys-287 (nucleophile) is an active-site residue. L-glutamine is bound by residues Leu-288, Gln-291, Asn-329, Gly-331, and Phe-332. Catalysis depends on residues His-371 and Glu-373.

It belongs to the CarA family. In terms of assembly, composed of two chains; the small (or glutamine) chain promotes the hydrolysis of glutamine to ammonia, which is used by the large (or ammonia) chain to synthesize carbamoyl phosphate. Tetramer of heterodimers (alpha,beta)4.

The enzyme catalyses hydrogencarbonate + L-glutamine + 2 ATP + H2O = carbamoyl phosphate + L-glutamate + 2 ADP + phosphate + 2 H(+). It carries out the reaction L-glutamine + H2O = L-glutamate + NH4(+). It participates in amino-acid biosynthesis; L-arginine biosynthesis; carbamoyl phosphate from bicarbonate: step 1/1. It functions in the pathway pyrimidine metabolism; UMP biosynthesis via de novo pathway; (S)-dihydroorotate from bicarbonate: step 1/3. Functionally, small subunit of the glutamine-dependent carbamoyl phosphate synthetase (CPSase). CPSase catalyzes the formation of carbamoyl phosphate from the ammonia moiety of glutamine, carbonate, and phosphate donated by ATP, constituting the first step of 2 biosynthetic pathways, one leading to arginine and/or urea and the other to pyrimidine nucleotides. The small subunit (glutamine amidotransferase) binds and cleaves glutamine to supply the large subunit with the substrate ammonia. This chain is Carbamoyl phosphate synthase small chain, found in Bartonella henselae (strain ATCC 49882 / DSM 28221 / CCUG 30454 / Houston 1) (Rochalimaea henselae).